The primary structure comprises 257 residues: Flavin-dependent thymidylate synthase (257 aa).

Residues 1 to 202 (MNVKLVSYTR…PRLFRYVGPN (202 aa)) enclose the ThyX domain. FAD-binding positions include Ser55, 79–81 (RHR), and Gln87. Residues 76–79 (QLVR), 87–91 (QMSHR), and Arg141 contribute to the dUMP site. Residues 79–89 (RHRVASYTQMS) carry the ThyX motif motif. Residues 157–159 (NAR) and Asn163 each bind FAD. Arg168 provides a ligand contact to dUMP. Arg168 functions as the Involved in ionization of N3 of dUMP, leading to its activation in the catalytic mechanism.

This sequence belongs to the thymidylate synthase ThyX family. Homotetramer. Requires FAD as cofactor.

The enzyme catalyses dUMP + (6R)-5,10-methylene-5,6,7,8-tetrahydrofolate + NADPH + H(+) = dTMP + (6S)-5,6,7,8-tetrahydrofolate + NADP(+). It functions in the pathway pyrimidine metabolism; dTTP biosynthesis. Functionally, catalyzes the reductive methylation of 2'-deoxyuridine-5'-monophosphate (dUMP) to 2'-deoxythymidine-5'-monophosphate (dTMP) while utilizing 5,10-methylenetetrahydrofolate (mTHF) as the methyl donor, and NADPH and FADH(2) as the reductant. This chain is Flavin-dependent thymidylate synthase, found in Sulfurisphaera tokodaii (strain DSM 16993 / JCM 10545 / NBRC 100140 / 7) (Sulfolobus tokodaii).